The sequence spans 410 residues: Mating-type locus allele B5 protein (410 aa).

The interval 1-110 (MSSDPNFSLT…FNVVSPAVVC (110 aa)) is variable domain between B alleles. Positions 107-184 (AVVCRNLSED…NARRRSGWSH (78 aa)) form a DNA-binding region, homeobox; TALE-type. A highly conserved between B alleles region spans residues 111–410 (RNLSEDLPAY…PFLCLSVAFV (300 aa)). Disordered regions lie at residues 201 to 241 (VRAK…TPAD), 275 to 336 (NKKT…PELS), and 366 to 395 (ILQS…PDEV). Residues 206–222 (SSSNQSTPPSPTSEYPS) are compositionally biased toward low complexity. Residues 276–308 (KKTPKPGMPRPVTTVTKRQPARKTKPAAKPKSR) carry the Nuclear localization signal motif. Residues 294–307 (QPARKTKPAAKPKS) are compositionally biased toward basic residues. Over residues 312–336 (PRASTTPSIDSTLDSSKLESTPELS) the composition is skewed to polar residues. Residues 333–410 (PELSMCSTAD…PFLCLSVAFV (78 aa)) form a not essential for B5 function region. Basic residues predominate over residues 375–388 (RGNRKVKALPKRAG).

It belongs to the TALE/M-ATYP homeobox family.

It is found in the nucleus. Functionally, the B locus has at least 25 alleles, and any combination of two different B alleles yields a multimeric regulatory protein, that activates genes responsible for the pathogenicity and for the sexual development of the fungus within the corn plant. This chain is Mating-type locus allele B5 protein, found in Mycosarcoma maydis (Corn smut fungus).